The chain runs to 183 residues: Putative manganese efflux pump MntP (183 aa).

Helical transmembrane passes span Thr3 to Tyr23, Thr43 to Ile63, Ile66 to Leu86, Leu107 to Ile127, Phe134 to Leu154, and Ile161 to Ile181.

It belongs to the MntP (TC 9.B.29) family.

Its subcellular location is the cell inner membrane. Probably functions as a manganese efflux pump. The chain is Putative manganese efflux pump MntP from Fusobacterium nucleatum subsp. nucleatum (strain ATCC 25586 / DSM 15643 / BCRC 10681 / CIP 101130 / JCM 8532 / KCTC 2640 / LMG 13131 / VPI 4355).